Reading from the N-terminus, the 440-residue chain is Glucoside xylosyltransferase 1 (440 aa).

Residues 1–6 are Cytoplasmic-facing; the sequence is MRRYLR. The helical; Signal-anchor for type II membrane protein transmembrane segment at 7–29 threads the bilayer; the sequence is VVVLCVACGFCSLLYAFSQLAVS. Residues 30 to 440 lie on the Lumenal side of the membrane; the sequence is LEEGTGGGGG…DRYARSPKEK (411 aa). 3 N-linked (GlcNAc...) asparagine glycosylation sites follow: asparagine 173, asparagine 237, and asparagine 278.

Belongs to the glycosyltransferase 8 family.

The protein resides in the membrane. The catalysed reaction is 3-O-(beta-D-glucosyl)-L-seryl-[EGF-like domain protein] + UDP-alpha-D-xylose = 3-O-[alpha-D-xylosyl-(1-&gt;3)-beta-D-glucosyl]-L-seryl-[EGF-like domain protein] + UDP + H(+). In terms of biological role, glycosyltransferase which elongates the O-linked glucose attached to EGF-like repeats in the extracellular domain of Notch proteins by catalyzing the addition of xylose. This is Glucoside xylosyltransferase 1 (GXYLT1) from Homo sapiens (Human).